The sequence spans 1018 residues: Integrator complex subunit 5 (1018 aa).

The disordered stretch occupies residues 1–26; it reads MSALCDPPGAPGPPGPAPATHGPAPL. Position 2 is an N-acetylserine (S2). The span at 8–17 shows a compositional bias: pro residues; that stretch reads PGAPGPPGPA. At S278 the chain carries Phosphoserine. Helical transmembrane passes span 533–553, 855–875, and 929–949; these read LATQ…PLAF, LLFE…YCSV, and VFSQ…WGFL.

Belongs to the Integrator subunit 5 family. In terms of assembly, component of the Integrator complex, composed of core subunits INTS1, INTS2, INTS3, INTS4, INTS5, INTS6, INTS7, INTS8, INTS9/RC74, INTS10, INTS11/CPSF3L, INTS12, INTS13, INTS14 and INTS15. The core complex associates with protein phosphatase 2A subunits PPP2CA and PPP2R1A, to form the Integrator-PP2A (INTAC) complex.

Its subcellular location is the nucleus. It is found in the cytoplasm. The protein localises to the nucleus membrane. Functionally, component of the integrator complex, a multiprotein complex that terminates RNA polymerase II (Pol II) transcription in the promoter-proximal region of genes. The integrator complex provides a quality checkpoint during transcription elongation by driving premature transcription termination of transcripts that are unfavorably configured for transcriptional elongation: the complex terminates transcription by (1) catalyzing dephosphorylation of the C-terminal domain (CTD) of Pol II subunit POLR2A/RPB1 and SUPT5H/SPT5, (2) degrading the exiting nascent RNA transcript via endonuclease activity and (3) promoting the release of Pol II from bound DNA. The integrator complex is also involved in terminating the synthesis of non-coding Pol II transcripts, such as enhancer RNAs (eRNAs), small nuclear RNAs (snRNAs), telomerase RNAs and long non-coding RNAs (lncRNAs). Mediates recruitment of cytoplasmic dynein to the nuclear envelope, probably as component of the integrator complex. This is Integrator complex subunit 5 (Ints5) from Mus musculus (Mouse).